Consider the following 39-residue polypeptide: Photosystem II reaction center protein Y (39 aa).

The helical transmembrane segment at 5 to 23 threads the bilayer; the sequence is VLVVVGPLLIAASWAVFNI.

This sequence belongs to the PsbY family. PSII is composed of 1 copy each of membrane proteins PsbA, PsbB, PsbC, PsbD, PsbE, PsbF, PsbH, PsbI, PsbJ, PsbK, PsbL, PsbM, PsbT, PsbX, PsbY, PsbZ, Psb30/Ycf12, peripheral proteins PsbO, CyanoQ (PsbQ), PsbU, PsbV and a large number of cofactors. It forms dimeric complexes.

The protein resides in the cellular thylakoid membrane. Loosely associated component of the core of photosystem II (PSII), it is not always seen in crystals. PSII is a light-driven water plastoquinone oxidoreductase, using light energy to abstract electrons from H(2)O, generating a proton gradient subsequently used for ATP formation. This Rippkaea orientalis (strain PCC 8801 / RF-1) (Cyanothece sp. (strain PCC 8801)) protein is Photosystem II reaction center protein Y.